The sequence spans 448 residues: ATP-dependent protease ATPase subunit HslU (448 aa).

ATP-binding positions include Ile-18, 60-65 (GVGKTE), Asp-261, Glu-326, and Arg-398.

It belongs to the ClpX chaperone family. HslU subfamily. A double ring-shaped homohexamer of HslV is capped on each side by a ring-shaped HslU homohexamer. The assembly of the HslU/HslV complex is dependent on binding of ATP.

The protein resides in the cytoplasm. Functionally, ATPase subunit of a proteasome-like degradation complex; this subunit has chaperone activity. The binding of ATP and its subsequent hydrolysis by HslU are essential for unfolding of protein substrates subsequently hydrolyzed by HslV. HslU recognizes the N-terminal part of its protein substrates and unfolds these before they are guided to HslV for hydrolysis. This is ATP-dependent protease ATPase subunit HslU from Paraburkholderia phytofirmans (strain DSM 17436 / LMG 22146 / PsJN) (Burkholderia phytofirmans).